The sequence spans 359 residues: UDP-N-acetylglucosamine--N-acetylmuramyl-(pentapeptide) pyrophosphoryl-undecaprenol N-acetylglucosamine transferase (359 aa).

UDP-N-acetyl-alpha-D-glucosamine contacts are provided by residues 15–17 (TGG), asparagine 127, arginine 166, serine 191, isoleucine 245, 264–269 (ALTVSE), and glutamine 290.

It belongs to the glycosyltransferase 28 family. MurG subfamily.

It localises to the cell inner membrane. The enzyme catalyses di-trans,octa-cis-undecaprenyl diphospho-N-acetyl-alpha-D-muramoyl-L-alanyl-D-glutamyl-meso-2,6-diaminopimeloyl-D-alanyl-D-alanine + UDP-N-acetyl-alpha-D-glucosamine = di-trans,octa-cis-undecaprenyl diphospho-[N-acetyl-alpha-D-glucosaminyl-(1-&gt;4)]-N-acetyl-alpha-D-muramoyl-L-alanyl-D-glutamyl-meso-2,6-diaminopimeloyl-D-alanyl-D-alanine + UDP + H(+). The protein operates within cell wall biogenesis; peptidoglycan biosynthesis. Its function is as follows. Cell wall formation. Catalyzes the transfer of a GlcNAc subunit on undecaprenyl-pyrophosphoryl-MurNAc-pentapeptide (lipid intermediate I) to form undecaprenyl-pyrophosphoryl-MurNAc-(pentapeptide)GlcNAc (lipid intermediate II). In Pseudomonas putida (strain W619), this protein is UDP-N-acetylglucosamine--N-acetylmuramyl-(pentapeptide) pyrophosphoryl-undecaprenol N-acetylglucosamine transferase.